The chain runs to 75 residues: Small capsomere-interacting protein (75 aa).

The protein belongs to the herpesviridae small capsomere-interacting protein family. As to quaternary structure, interacts with the major capsid protein/MCP.

Its subcellular location is the virion. The protein localises to the host nucleus. Participates in the assembly of the infectious particles by decorating the outer surface of the capsid shell and thus forming a layer between the capsid and the tegument. Complexes composed of the major capsid protein and small capsomere-interacting protein/SCP assemble together in the host cytoplasm and are translocated to the nucleus, where they accumulate and participate in capsid assembly. This is Small capsomere-interacting protein from Homo sapiens (Human).